Reading from the N-terminus, the 156-residue chain is Transcriptional repressor NrdR (156 aa).

A zinc finger lies at 3 to 34 (CPYCGETEDKVIDSRQGKEADVIRRRRECLSC). The ATP-cone domain maps to 49–139 (LVIIKKDGRR…VYREFKHVND (91 aa)).

The protein belongs to the NrdR family. It depends on Zn(2+) as a cofactor.

Negatively regulates transcription of bacterial ribonucleotide reductase nrd genes and operons by binding to NrdR-boxes. This Desulfatibacillum aliphaticivorans protein is Transcriptional repressor NrdR.